The primary structure comprises 149 residues: Transcription factor HY5-like (149 aa).

Residues Met1–Lys77 are disordered. Positions Glu23–Ala36 are interaction with COP1. Position 24 is a phosphoserine (Ser24). A compositionally biased stretch (polar residues) spans Glu55–Ser64. The bZIP domain occupies Glu78–Thr141. Residues Arg80–Lys100 are basic motif. The leucine-zipper stretch occupies residues Leu106–Leu134.

Belongs to the bZIP family. Heterodimer; heterodimerizes with HY5 via the leucine-zipper domains. Interacts with COP1 WD40 domain. Interacts with BBX24/STO and BBX25/STH. In terms of processing, ubiquitinated by COP1. Ubiquitination takes place in darkness and leads to its subsequent degradation, thereby preventing the activation of photomorphogenesis signals.

It localises to the nucleus. Its function is as follows. Transcription factor that promotes photomorphogenesis in light. Acts downstream of the light receptor network and directly affects transcription of light-induced genes. Specifically involved in the blue light specific pathway, suggesting that it participates in transmission of cryptochromes (CRY1 and CRY2) signals to downstream responses. In darkness, its degradation prevents the activation of light-induced genes. This is Transcription factor HY5-like (HYH) from Arabidopsis thaliana (Mouse-ear cress).